A 395-amino-acid chain; its full sequence is S-adenosylmethionine synthase (395 aa).

His-16 provides a ligand contact to ATP. A Mg(2+)-binding site is contributed by Asp-18. Glu-44 contributes to the K(+) binding site. L-methionine-binding residues include Glu-57 and Gln-100. The segment at 100–110 (QSPDIAQGVDR) is flexible loop. ATP is bound by residues 167–169 (DAK), 233–234 (RF), Asp-242, 248–249 (RK), Ala-265, and Lys-269. Residue Asp-242 participates in L-methionine binding. Residue Lys-273 coordinates L-methionine.

This sequence belongs to the AdoMet synthase family. Homotetramer; dimer of dimers. It depends on Mg(2+) as a cofactor. Requires K(+) as cofactor.

The protein localises to the cytoplasm. It catalyses the reaction L-methionine + ATP + H2O = S-adenosyl-L-methionine + phosphate + diphosphate. The protein operates within amino-acid biosynthesis; S-adenosyl-L-methionine biosynthesis; S-adenosyl-L-methionine from L-methionine: step 1/1. Its function is as follows. Catalyzes the formation of S-adenosylmethionine (AdoMet) from methionine and ATP. The overall synthetic reaction is composed of two sequential steps, AdoMet formation and the subsequent tripolyphosphate hydrolysis which occurs prior to release of AdoMet from the enzyme. The sequence is that of S-adenosylmethionine synthase from Burkholderia cenocepacia (strain HI2424).